A 226-amino-acid chain; its full sequence is Enolase-phosphatase E1 (226 aa).

The protein belongs to the HAD-like hydrolase superfamily. MasA/MtnC family. Monomer. It depends on Mg(2+) as a cofactor.

It catalyses the reaction 5-methylsulfanyl-2,3-dioxopentyl phosphate + H2O = 1,2-dihydroxy-5-(methylsulfanyl)pent-1-en-3-one + phosphate. It functions in the pathway amino-acid biosynthesis; L-methionine biosynthesis via salvage pathway; L-methionine from S-methyl-5-thio-alpha-D-ribose 1-phosphate: step 3/6. The protein operates within amino-acid biosynthesis; L-methionine biosynthesis via salvage pathway; L-methionine from S-methyl-5-thio-alpha-D-ribose 1-phosphate: step 4/6. Bifunctional enzyme that catalyzes the enolization of 2,3-diketo-5-methylthiopentyl-1-phosphate (DK-MTP-1-P) into the intermediate 2-hydroxy-3-keto-5-methylthiopentenyl-1-phosphate (HK-MTPenyl-1-P), which is then dephosphorylated to form the acireductone 1,2-dihydroxy-3-keto-5-methylthiopentene (DHK-MTPene). This chain is Enolase-phosphatase E1, found in Shewanella amazonensis (strain ATCC BAA-1098 / SB2B).